The primary structure comprises 245 residues: Uridylate kinase (245 aa).

12–15 (KISG) contacts ATP. G55 provides a ligand contact to UMP. G56 and R60 together coordinate ATP. UMP is bound by residues D76 and 137-144 (AGAPYLTT). T164, Y171, and D174 together coordinate ATP.

It belongs to the UMP kinase family. Homohexamer.

Its subcellular location is the cytoplasm. It catalyses the reaction UMP + ATP = UDP + ADP. The protein operates within pyrimidine metabolism; CTP biosynthesis via de novo pathway; UDP from UMP (UMPK route): step 1/1. Inhibited by UTP. In terms of biological role, catalyzes the reversible phosphorylation of UMP to UDP. The polypeptide is Uridylate kinase (Chlamydia trachomatis serovar A (strain ATCC VR-571B / DSM 19440 / HAR-13)).